The following is a 251-amino-acid chain: uncharacterized protein (251 aa).

This is an uncharacterized protein from Mycoplasma genitalium (strain ATCC 33530 / DSM 19775 / NCTC 10195 / G37) (Mycoplasmoides genitalium).